We begin with the raw amino-acid sequence, 66 residues long: Large ribosomal subunit protein bL35 (66 aa).

Residues 1-14 (MPKMKTKSAAKKRF) show a composition bias toward basic residues. The segment at 1 to 34 (MPKMKTKSAAKKRFSMTATGKVKAGPAGKRHGMI) is disordered.

It belongs to the bacterial ribosomal protein bL35 family.

This chain is Large ribosomal subunit protein bL35, found in Paracoccus denitrificans (strain Pd 1222).